The following is a 65-amino-acid chain: Photosystem II reaction center protein J (65 aa).

Residues 35-55 form a helical membrane-spanning segment; it reads LWLVATAGGIAVIFVLGIFFY.

This sequence belongs to the PsbJ family. PSII is composed of 1 copy each of membrane proteins PsbA, PsbB, PsbC, PsbD, PsbE, PsbF, PsbH, PsbI, PsbJ, PsbK, PsbL, PsbM, PsbT, PsbX, PsbY, Psb30/Ycf12, peripheral proteins PsbO, CyanoQ (PsbQ), PsbU, PsbV and a large number of cofactors. It forms dimeric complexes.

The protein localises to the cellular thylakoid membrane. One of the components of the core complex of photosystem II (PSII). PSII is a light-driven water:plastoquinone oxidoreductase that uses light energy to abstract electrons from H(2)O, generating O(2) and a proton gradient subsequently used for ATP formation. It consists of a core antenna complex that captures photons, and an electron transfer chain that converts photonic excitation into a charge separation. The protein is Photosystem II reaction center protein J of Prochlorococcus marinus (strain MIT 9312).